Reading from the N-terminus, the 887-residue chain is PAN2-PAN3 deadenylation complex subunit PAN3 (887 aa).

Residues 43 to 71 (GVKLKYCRYYAKDKTCFYGEECQFLHEDP) form a C3H1-type zinc finger. 3 disordered regions span residues 102–147 (AVAG…IPGM), 284–307 (QTPN…SNVS), and 325–392 (SPAT…SGQV). Residues 122 to 138 (PGTGAAAGGGGSSGGLD) show a composition bias toward gly residues. Residues 147–498 (MDGGALTDTS…PPPNRIQKSS (352 aa)) form a necessary and sufficient for interaction with PABPC1 but not needed for interaction with PAN2 region. A PABPC-interacting motif-2 (PAM-2) motif is present at residues 284–299 (QTPNPTASEFIPKGGS). A compositionally biased stretch (polar residues) spans 298–307 (GSTSRLSNVS). Ser-354 and Ser-361 each carry phosphoserine. The segment covering 363 to 392 (TPNPASYMVPSSASTSVNNPVSQTPSSGQV) has biased composition (polar residues). Residues 463-750 (QIDQADMPAV…SVNDIMPMIG (288 aa)) are pseudokinase domain. Residues Arg-521, 570–577 (DFHAGGET), and 644–645 (TK) contribute to the ATP site. Residues 751–789 (ARFYTQLDAAQMRNDVIEEDLAKEVQNGRLFRLLAKLGT) are a coiled coil. Positions 790 to 887 (INERPEFQKD…ELIAAANGQL (98 aa)) are knob domain.

It belongs to the protein kinase superfamily. PAN3 family. As to quaternary structure, homodimer. Forms a heterotrimer with a catalytic subunit PAN2 to form the poly(A)-nuclease (PAN) deadenylation complex. Interacts (via PAM-2 motif) with poly(A)-binding protein PABPC1 (via PABC domain), conferring substrate specificity of the enzyme complex. Interacts with the GW182 family proteins TNRC6A, TNRC6B and TNRC6. Interacts with YTHDF3. In terms of assembly, interacts with PAN2. Interacts (via N-terminus) with PABPC1 at lower efficiency than isoform 3. Interacts with PAN2. Interacts (via N-terminus) with PABPC1 at higher efficiency than isoform 1.

Its subcellular location is the cytoplasm. It localises to the P-body. It is found in the nucleus. Its function is as follows. Regulatory subunit of the poly(A)-nuclease (PAN) deadenylation complex, one of two cytoplasmic mRNA deadenylases involved in general and miRNA-mediated mRNA turnover. PAN specifically shortens poly(A) tails of RNA and the activity is stimulated by poly(A)-binding protein (PABP). PAN deadenylation is followed by rapid degradation of the shortened mRNA tails by the CCR4-NOT complex. Deadenylated mRNAs are then degraded by two alternative mechanisms, namely exosome-mediated 3'-5' exonucleolytic degradation, or deadenylation-dependent mRNA decapping and subsequent 5'-3' exonucleolytic degradation by XRN1. PAN3 acts as a regulator for PAN activity, recruiting the catalytic subunit PAN2 to mRNA via its interaction with RNA and PABP, and to miRNA targets via its interaction with GW182 family proteins. Functionally, decreases PAN2-mediated deadenylation, possibly by preventing progression into the second CCR4-NOT mediated stage of biphasic deadenylation. Has a significant effect on mRNA stability, generally stabilizing a subset of the transcriptome. Stabilizes mRNAs degraded by the AU-rich element (ARE)-mediated mRNA decay pathway but promotes degradation of mRNAs by the microRNA-mediated pathway. Its activity influences mRNP remodeling, specifically reducing formation of a subset of P-bodies containing GW220, an isoform of TNRC6A. Enhances PAN2 deadenylase activity and has an extensive effect on mRNA stability, generally enhancing mRNA decay across the transcriptome by multiple pathways, including the AU-rich element (ARE)-mediated pathway, microRNA-mediated pathway and the nonsense-mediated pathway (NMD). Its activity is required for efficient P-body formation. May be involved in regulating mRNAs of genes involved in cell cycle progression and cell proliferation. The sequence is that of PAN2-PAN3 deadenylation complex subunit PAN3 from Homo sapiens (Human).